Reading from the N-terminus, the 259-residue chain is S-methyl-5'-thioadenosine phosphorylase (259 aa).

Phosphate is bound by residues Ser-9 and 50-51 (RH). Met-175 is a substrate binding site. Thr-176 lines the phosphate pocket. 199 to 201 (DLD) serves as a coordination point for substrate.

The protein belongs to the PNP/MTAP phosphorylase family. MTAP subfamily. As to quaternary structure, homohexamer. Dimer of a homotrimer.

It carries out the reaction S-methyl-5'-thioadenosine + phosphate = 5-(methylsulfanyl)-alpha-D-ribose 1-phosphate + adenine. It functions in the pathway amino-acid biosynthesis; L-methionine biosynthesis via salvage pathway; S-methyl-5-thio-alpha-D-ribose 1-phosphate from S-methyl-5'-thioadenosine (phosphorylase route): step 1/1. In terms of biological role, catalyzes the reversible phosphorylation of S-methyl-5'-thioadenosine (MTA) to adenine and 5-methylthioribose-1-phosphate. Involved in the breakdown of MTA, a major by-product of polyamine biosynthesis. Responsible for the first step in the methionine salvage pathway after MTA has been generated from S-adenosylmethionine. Has broad substrate specificity with 6-aminopurine nucleosides as preferred substrates. This is S-methyl-5'-thioadenosine phosphorylase from Mycolicibacterium smegmatis (strain ATCC 700084 / mc(2)155) (Mycobacterium smegmatis).